The sequence spans 155 residues: 6,7-dimethyl-8-ribityllumazine synthase (155 aa).

Residues Phe-23, 57–59 (AFE), and 81–83 (AVI) contribute to the 5-amino-6-(D-ribitylamino)uracil site. A (2S)-2-hydroxy-3-oxobutyl phosphate-binding site is contributed by 86 to 87 (ST). The active-site Proton donor is His-89. Phe-114 contributes to the 5-amino-6-(D-ribitylamino)uracil binding site. Arg-128 contributes to the (2S)-2-hydroxy-3-oxobutyl phosphate binding site.

The protein belongs to the DMRL synthase family.

The catalysed reaction is (2S)-2-hydroxy-3-oxobutyl phosphate + 5-amino-6-(D-ribitylamino)uracil = 6,7-dimethyl-8-(1-D-ribityl)lumazine + phosphate + 2 H2O + H(+). It participates in cofactor biosynthesis; riboflavin biosynthesis; riboflavin from 2-hydroxy-3-oxobutyl phosphate and 5-amino-6-(D-ribitylamino)uracil: step 1/2. In terms of biological role, catalyzes the formation of 6,7-dimethyl-8-ribityllumazine by condensation of 5-amino-6-(D-ribitylamino)uracil with 3,4-dihydroxy-2-butanone 4-phosphate. This is the penultimate step in the biosynthesis of riboflavin. This chain is 6,7-dimethyl-8-ribityllumazine synthase, found in Dehalococcoides mccartyi (strain ATCC BAA-2100 / JCM 16839 / KCTC 5957 / BAV1).